The primary structure comprises 284 residues: uncharacterized protein (284 aa).

An N-terminal signal peptide occupies residues 1 to 21 (MKTTMLMLVLLVCSYIHYVCA). Transmembrane regions (helical) follow at residues 88-108 (AGPF…FLWA), 144-164 (ALGV…LGVW), and 212-232 (VFTT…SPTY).

It is found in the membrane. This is an uncharacterized protein from Schizosaccharomyces pombe (strain 972 / ATCC 24843) (Fission yeast).